We begin with the raw amino-acid sequence, 349 residues long: Aspartate-semialdehyde dehydrogenase (349 aa).

NADP(+)-binding positions include 12 to 15 (TGSV) and 39 to 40 (NS). Residue R113 coordinates phosphate. C148 functions as the Acyl-thioester intermediate in the catalytic mechanism. Residue Q175 participates in substrate binding. 178-179 (SG) contributes to the NADP(+) binding site. E201 contributes to the substrate binding site. A phosphate-binding site is contributed by K204. R234 serves as a coordination point for substrate. H241 acts as the Proton acceptor in catalysis. Residue 326-327 (NT) coordinates NADP(+).

Belongs to the aspartate-semialdehyde dehydrogenase family. In terms of assembly, homodimer.

It carries out the reaction L-aspartate 4-semialdehyde + phosphate + NADP(+) = 4-phospho-L-aspartate + NADPH + H(+). The protein operates within amino-acid biosynthesis; L-lysine biosynthesis via DAP pathway; (S)-tetrahydrodipicolinate from L-aspartate: step 2/4. It functions in the pathway amino-acid biosynthesis; L-methionine biosynthesis via de novo pathway; L-homoserine from L-aspartate: step 2/3. It participates in amino-acid biosynthesis; L-threonine biosynthesis; L-threonine from L-aspartate: step 2/5. Catalyzes the NADPH-dependent formation of L-aspartate-semialdehyde (L-ASA) by the reductive dephosphorylation of L-aspartyl-4-phosphate. This Leptospira interrogans serogroup Icterohaemorrhagiae serovar Lai (strain 56601) protein is Aspartate-semialdehyde dehydrogenase.